The following is a 247-amino-acid chain: Carboxy-S-adenosyl-L-methionine synthase (247 aa).

S-adenosyl-L-methionine contacts are provided by residues Y39, 64-66, 89-90, 117-118, N132, and R199; these read GCS, DN, and DI.

The protein belongs to the class I-like SAM-binding methyltransferase superfamily. Cx-SAM synthase family. Homodimer.

The catalysed reaction is prephenate + S-adenosyl-L-methionine = carboxy-S-adenosyl-L-methionine + 3-phenylpyruvate + H2O. Catalyzes the conversion of S-adenosyl-L-methionine (SAM) to carboxy-S-adenosyl-L-methionine (Cx-SAM). This chain is Carboxy-S-adenosyl-L-methionine synthase, found in Salmonella choleraesuis (strain SC-B67).